We begin with the raw amino-acid sequence, 85 residues long: Large ribosomal subunit protein bL27 (85 aa).

Residues 1–26 (MAHKKAGGSTRNGRDSESKRLGVKRF) form a disordered region.

The protein belongs to the bacterial ribosomal protein bL27 family.

This chain is Large ribosomal subunit protein bL27, found in Saccharophagus degradans (strain 2-40 / ATCC 43961 / DSM 17024).